Here is a 130-residue protein sequence, read N- to C-terminus: Anti-adapter protein IraD (130 aa).

Belongs to the GpW/Gp25 family. IraD subfamily. As to quaternary structure, interacts with RssB.

The protein localises to the cytoplasm. Functionally, inhibits RpoS proteolysis by regulating RssB activity, thereby increasing the stability of the sigma stress factor RpoS during oxidative stress. Its effect on RpoS stability is due to its interaction with RssB, which probably blocks the interaction of RssB with RpoS, and the consequent delivery of the RssB-RpoS complex to the ClpXP protein degradation pathway. The chain is Anti-adapter protein IraD from Escherichia coli (strain K12 / MC4100 / BW2952).